The sequence spans 142 residues: Non-specific lipid transfer protein GPI-anchored 34 (142 aa).

Positions 1–22 (MAVAVTAVLFLAVVIAPQWTET) are cleaved as a signal peptide. Residues 21–43 (ETKKPPRPSDTSDTSGTSGRDRR) are disordered. Low complexity predominate over residues 29 to 38 (SDTSDTSGTS). Cystine bridges form between C46–C85, C57–C69, C70–C106, and C83–C114. The GPI-anchor amidated asparagine moiety is linked to residue N120. Positions 121 to 142 (GGATKKIVASMGLFGVVASLFF) are cleaved as a propeptide — removed in mature form.

The protein belongs to the plant LTP family.

The protein localises to the cell membrane. Functionally, probable lipid transfer protein. This chain is Non-specific lipid transfer protein GPI-anchored 34, found in Arabidopsis thaliana (Mouse-ear cress).